We begin with the raw amino-acid sequence, 149 residues long: Arginine repressor (149 aa).

The protein belongs to the ArgR family.

It is found in the cytoplasm. It functions in the pathway amino-acid biosynthesis; L-arginine biosynthesis [regulation]. Functionally, regulates arginine biosynthesis genes. This is Arginine repressor from Listeria innocua serovar 6a (strain ATCC BAA-680 / CLIP 11262).